The chain runs to 372 residues: Signal peptide peptidase-like 1 (372 aa).

Residues 1–6 (METLWT) lie on the Lumenal side of the membrane. Residues 7 to 27 (LLYLLEPAPATLIVTAVTVTF) form a helical membrane-spanning segment. Residues 28-54 (ASAFRALNYGKEMERNRDFSEASITLD) lie on the Cytoplasmic side of the membrane. Residues 55–77 (SSQALMIPVMSSCSLLLMFYLFS) traverse the membrane as a helical segment. The Lumenal segment spans residues 78–81 (SVSQ). The helical transmembrane segment at 82–104 (LLTAFTAIASVSSLFYWLSPYAV) threads the bilayer. Residues 105 to 123 (YMKTQLGLSDPFLSRCCSK) lie on the Cytoplasmic side of the membrane. A helical membrane pass occupies residues 124–146 (SFTRIQGLLLVACAMTVVAWLIS). Topologically, residues 147-149 (GHW) are lumenal. Residues 150–167 (VLNNLLGISICIAFVSHV) traverse the membrane as a helical segment. Over 168–171 (RLPN) the chain is Cytoplasmic. The chain crosses the membrane as a helical span at residues 172–192 (IKICAMLLVCLFVYDIFWVFF). The active site involves Asp186. Residues 193–257 (SERFFGANVM…GVVPGVSASD (65 aa)) lie on the Lumenal side of the membrane. The helical transmembrane segment at 258–278 (FMMLGLGDMAIPAMLLALVLC) threads the bilayer. Residue Asp265 is part of the active site. Over 279–301 (FDHRKTRDVVNIFDLKSSKGHKY) the chain is Cytoplasmic. The chain crosses the membrane as a helical span at residues 302-322 (IWYALPGYAIGLVAALAAGVL). Residues 323 to 325 (THS) are Lumenal-facing. Residues 326–346 (PQPALLYLVPSTLGPVIFMSW) traverse the membrane as a helical segment. Residues 328–330 (PAL) carry the PAL motif. Residues 347 to 372 (RRKDLAELWEGPALSNPIEKSHEIEI) are Cytoplasmic-facing.

This sequence belongs to the peptidase A22B family. In terms of tissue distribution, ubiquitous.

It localises to the endosome membrane. Its function is as follows. Intramembrane-cleaving aspartic protease (I-CLiP) that cleaves type II membrane signal peptides in the hydrophobic plane of the membrane. The chain is Signal peptide peptidase-like 1 (SPPL1) from Arabidopsis thaliana (Mouse-ear cress).